Consider the following 363-residue polypeptide: Chorismate synthase (363 aa).

2 residues coordinate NADP(+): arginine 48 and arginine 54. FMN is bound by residues 125–127 (RSS), 237–238 (NA), glycine 277, 292–296 (KPTSS), and arginine 318.

The protein belongs to the chorismate synthase family. In terms of assembly, homotetramer. FMNH2 serves as cofactor.

It catalyses the reaction 5-O-(1-carboxyvinyl)-3-phosphoshikimate = chorismate + phosphate. Its pathway is metabolic intermediate biosynthesis; chorismate biosynthesis; chorismate from D-erythrose 4-phosphate and phosphoenolpyruvate: step 7/7. Its function is as follows. Catalyzes the anti-1,4-elimination of the C-3 phosphate and the C-6 proR hydrogen from 5-enolpyruvylshikimate-3-phosphate (EPSP) to yield chorismate, which is the branch point compound that serves as the starting substrate for the three terminal pathways of aromatic amino acid biosynthesis. This reaction introduces a second double bond into the aromatic ring system. The protein is Chorismate synthase of Pseudomonas paraeruginosa (strain DSM 24068 / PA7) (Pseudomonas aeruginosa (strain PA7)).